Reading from the N-terminus, the 469-residue chain is Exodeoxyribonuclease 7 large subunit (469 aa).

This sequence belongs to the XseA family. Heterooligomer composed of large and small subunits.

The protein resides in the cytoplasm. It catalyses the reaction Exonucleolytic cleavage in either 5'- to 3'- or 3'- to 5'-direction to yield nucleoside 5'-phosphates.. Its function is as follows. Bidirectionally degrades single-stranded DNA into large acid-insoluble oligonucleotides, which are then degraded further into small acid-soluble oligonucleotides. This chain is Exodeoxyribonuclease 7 large subunit, found in Mycoplasma mycoides subsp. mycoides SC (strain CCUG 32753 / NCTC 10114 / PG1).